The chain runs to 1130 residues: Tyrosine-protein kinase ABL1 (1130 aa).

The CAP stretch occupies residues 1–60 (MLEICLKLVGCKSKKGLSSSSSCYLEEALQRPVASDFEPQGLSEAARWNSKENLLAGPSE). A lipid anchor (N-myristoyl glycine) is attached at Leu2. Residue Ser50 is modified to Phosphoserine. The SH3 domain maps to 61–121 (NDPNLFVALY…PSNYITPVNS (61 aa)). Tyr70 carries the post-translational modification Phosphotyrosine; by autocatalysis. Phosphotyrosine occurs at positions 115, 128, 139, 172, 185, and 215. The region spanning 127–217 (WYHGPVSRNA…GLITTLHYPA (91 aa)) is the SH2 domain. Tyr226 is modified (phosphotyrosine; by autocatalysis). Ser229 carries the post-translational modification Phosphoserine. The Protein kinase domain maps to 242–493 (ITMKHKLGGG…PSFAEIHQAF (252 aa)). 248–256 (LGGGQYGEV) lines the ATP pocket. A phosphotyrosine mark is found at Tyr253 and Tyr257. Residues Lys271 and 316 to 322 (EFMTYGN) contribute to the ATP site. Asp363 serves as the catalytic Proton acceptor. Residues 381–405 (DFGLSRLMTGDTYTAHAGAKFPIKW) carry the Kinase activation loop motif. Tyr393 carries the phosphotyrosine; by autocatalysis and SRC-type Tyr-kinases modification. Position 413 is a phosphotyrosine (Tyr413). Ser446, Ser559, and Ser569 each carry phosphoserine. The tract at residues 518–996 (AVSTLLQAPE…SASSALAGDQ (479 aa)) is disordered. Over residues 537 to 566 (RAAEHRDTTDVPEMPHSKGQGESDPLDHEP) the composition is skewed to basic and acidic residues. Residues 586 to 597 (EDERLLPKDKKT) are compositionally biased toward basic and acidic residues. The Nuclear localization signal 1 motif lies at 605 to 609 (KKKKK). Residues Ser618 and Ser619 each carry the phosphoserine; by PAK2 modification. Phosphoserine occurs at positions 620, 659, and 683. Positions 620–640 (SFREMDGQPERRGAGEEEGRD) are enriched in basic and acidic residues. Polar residues predominate over residues 689-698 (KSSTLTSSRL). The Nuclear localization signal 2 motif lies at 709–715 (SSKRFLR). N6-acetyllysine; by EP300 is present on Lys711. The residue at position 718 (Ser718) is a Phosphoserine. Thr735 and Thr751 each carry phosphothreonine. Residues 740 to 752 (LQSTGRQFDSSTF) are compositionally biased toward polar residues. Positions 755–774 (HKSEKPALPRKRAGENRSDQ) are enriched in basic and acidic residues. The Nuclear localization signal 3 motif lies at 762–769 (LPRKRAGE). A Phosphothreonine modification is found at Thr781. Basic and acidic residues predominate over residues 788 to 802 (KKNEEAADEVFKDIM). A phosphothreonine mark is found at Thr814, Thr823, Thr844, and Thr852. The residue at position 855 (Ser855) is a Phosphoserine. A DNA-binding region spans residues 869–968 (PAEESRVRRH…VLPATPKPQS (100 aa)). Residues 881-891 (SSESPGRDKGK) are compositionally biased toward basic and acidic residues. The span at 905-915 (ASAGKAGGKPS) shows a compositional bias: low complexity. A Phosphoserine modification is found at Ser917. Positions 953–1130 (EGLKKPVLPA…VKEISDIVQR (178 aa)) are F-actin-binding. Polar residues predominate over residues 965-975 (KPQSAKPSGTP). Ser977 bears the Phosphoserine mark. Low complexity predominate over residues 984–993 (TLPSASSALA). The Nuclear export signal motif lies at 1090–1100 (LENNLRELQIC).

It belongs to the protein kinase superfamily. Tyr protein kinase family. ABL subfamily. Interacts with SORBS1 following insulin stimulation. Found in a trimolecular complex containing CDK5 and CABLES1. Interacts with CABLES1 and PSTPIP1. Interacts with ZDHHC16, ITGB1 and HCK. Interacts with STX17; probably phosphorylates STX17. Interacts with INPPL1/SHIP2. Interacts with the 14-3-3 proteins, YWHAB, YWHAE, YWHAG, YWHAH, SFN and YWHAZ; the interaction with 14-3-3 proteins requires phosphorylation on Thr-735 and, sequesters ABL1 into the cytoplasm. Interacts with ABI1, ABI2, BCR, CRK, FGR, FYN, HCK, LYN, PSMA7 RAD9A, RAD51, RAD52, TP73 and WASF3. A complex made of ABL1, CTTN and MYLK regulates cortical actin-based cytoskeletal rearrangement critical to sphingosine 1-phosphate (S1P)-mediated endothelial cell (EC) barrier enhancement. Interacts (via SH3 domain) with CASP9; the interaction is direct and increases in the response of cells to genotoxic stress and ABL1/c-Abl activation. Found in a complex with ABL1, ABL2, CRK and UNC119; leading to the inhibition of CRK phosphorylation by ABL kinases. Interacts with TBX21. Interacts with NEDD9/HEF1; interaction is induced by CXCL12 promotion of ABL-mediated phosphorylation of NEDD9/HEF1. Requires Mg(2+) as cofactor. Acetylated at Lys-711 by EP300 which promotes the cytoplasmic translocation. Post-translationally, phosphorylation at Tyr-70 by members of the SRC family of kinases disrupts SH3 domain-based autoinhibitory interactions and intermolecular associations, such as that with ABI1, and also enhances kinase activity. Phosphorylation at Tyr-226 and Tyr-393 correlate with increased activity. DNA damage-induced activation of ABL1 requires the function of ATM and Ser-446 phosphorylation. Phosphorylation at Ser-569 has been attributed to a CDC2-associated kinase and is coupled to cell division. Phosphorylation at Ser-618 and Ser-619 by PAK2 increases binding to CRK and reduces binding to ABI1. Phosphorylation on Thr-735 is required for binding 14-3-3 proteins for cytoplasmic translocation. Phosphorylated by PRKDC. In terms of processing, polyubiquitinated. Polyubiquitination of ABL1 leads to degradation. In terms of tissue distribution, widely expressed.

Its subcellular location is the cytoplasm. The protein resides in the cytoskeleton. It is found in the nucleus. The protein localises to the mitochondrion. It localises to the nucleus membrane. It catalyses the reaction L-tyrosyl-[protein] + ATP = O-phospho-L-tyrosyl-[protein] + ADP + H(+). Stabilized in the inactive form by an association between the SH3 domain and the SH2-TK linker region, interactions of the N-terminal cap, and contributions from an N-terminal myristoyl group and phospholipids. Activated by autophosphorylation as well as by SRC-family kinase-mediated phosphorylation. Activated by RIN1 binding to the SH2 and SH3 domains. Also stimulated by cell death inducers and DNA-damage. Phosphatidylinositol 4,5-bisphosphate (PIP2), a highly abundant phosphoinositide known to regulate cytoskeletal and membrane proteins, also inhibits the tyrosine kinase activity. Activated by 5-(1,3-diaryl-1H-pyrazol-4-yl)hydantoin, 5-[3-(4-fluorophenyl)-1-phenyl-1H-pyrazol-4-yl]-2,4-imidazolidinedione (DPH). Inhibited by ABI1, whose activity is controlled by ABL1 itself through tyrosine phosphorylation. Also inhibited by imatinib mesylate (Gleevec) which is used for the treatment of chronic myeloid leukemia (CML), and by VX-680, an inhibitor that also acts on imatinib-resistant mutants. In terms of biological role, non-receptor tyrosine-protein kinase that plays a role in many key processes linked to cell growth and survival such as cytoskeleton remodeling in response to extracellular stimuli, cell motility and adhesion, receptor endocytosis, autophagy, DNA damage response and apoptosis. Coordinates actin remodeling through tyrosine phosphorylation of proteins controlling cytoskeleton dynamics like WASF3 (involved in branch formation); ANXA1 (involved in membrane anchoring); DBN1, DBNL, CTTN, RAPH1 and ENAH (involved in signaling); or MAPT and PXN (microtubule-binding proteins). Phosphorylation of WASF3 is critical for the stimulation of lamellipodia formation and cell migration. Involved in the regulation of cell adhesion and motility through phosphorylation of key regulators of these processes such as BCAR1, CRK, CRKL, DOK1, EFS or NEDD9. Phosphorylates multiple receptor tyrosine kinases and more particularly promotes endocytosis of EGFR, facilitates the formation of neuromuscular synapses through MUSK, inhibits PDGFRB-mediated chemotaxis and modulates the endocytosis of activated B-cell receptor complexes. Other substrates which are involved in endocytosis regulation are the caveolin (CAV1) and RIN1. Moreover, ABL1 regulates the CBL family of ubiquitin ligases that drive receptor down-regulation and actin remodeling. Phosphorylation of CBL leads to increased EGFR stability. Involved in late-stage autophagy by regulating positively the trafficking and function of lysosomal components. ABL1 targets to mitochondria in response to oxidative stress and thereby mediates mitochondrial dysfunction and cell death. In response to oxidative stress, phosphorylates serine/threonine kinase PRKD2 at 'Tyr-717'. ABL1 is also translocated in the nucleus where it has DNA-binding activity and is involved in DNA-damage response and apoptosis. Many substrates are known mediators of DNA repair: DDB1, DDB2, ERCC3, ERCC6, RAD9A, RAD51, RAD52 or WRN. Activates the proapoptotic pathway when the DNA damage is too severe to be repaired. Phosphorylates TP73, a primary regulator for this type of damage-induced apoptosis. Phosphorylates the caspase CASP9 on 'Tyr-153' and regulates its processing in the apoptotic response to DNA damage. Phosphorylates PSMA7 that leads to an inhibition of proteasomal activity and cell cycle transition blocks. ABL1 also acts as a regulator of multiple pathological signaling cascades during infection. Several known tyrosine-phosphorylated microbial proteins have been identified as ABL1 substrates. This is the case of A36R of Vaccinia virus, Tir (translocated intimin receptor) of pathogenic E.coli and possibly Citrobacter, CagA (cytotoxin-associated gene A) of H.pylori, or AnkA (ankyrin repeat-containing protein A) of A.phagocytophilum. Pathogens can highjack ABL1 kinase signaling to reorganize the host actin cytoskeleton for multiple purposes, like facilitating intracellular movement and host cell exit. Finally, functions as its own regulator through autocatalytic activity as well as through phosphorylation of its inhibitor, ABI1. Regulates T-cell differentiation in a TBX21-dependent manner. Positively regulates chemokine-mediated T-cell migration, polarization, and homing to lymph nodes and immune-challenged tissues, potentially via activation of NEDD9/HEF1 and RAP1. Phosphorylates TBX21 on tyrosine residues leading to an enhancement of its transcriptional activator activity. In Homo sapiens (Human), this protein is Tyrosine-protein kinase ABL1 (ABL1).